The chain runs to 492 residues: 2,3-bisphosphoglycerate-independent phosphoglycerate mutase (492 aa).

The Mn(2+) site is built by aspartate 11 and serine 61. The Phosphoserine intermediate role is filled by serine 61. Residues histidine 118, 147–148, arginine 178, arginine 184, 248–251, and lysine 320 each bind substrate; these read RD and RNDR. Residues aspartate 386, histidine 390, aspartate 427, histidine 428, and histidine 445 each coordinate Mn(2+).

This sequence belongs to the BPG-independent phosphoglycerate mutase family. As to quaternary structure, monomer. It depends on Mn(2+) as a cofactor.

The catalysed reaction is (2R)-2-phosphoglycerate = (2R)-3-phosphoglycerate. The protein operates within carbohydrate degradation; glycolysis; pyruvate from D-glyceraldehyde 3-phosphate: step 3/5. Functionally, catalyzes the interconversion of 2-phosphoglycerate and 3-phosphoglycerate. This chain is 2,3-bisphosphoglycerate-independent phosphoglycerate mutase, found in Campylobacter jejuni subsp. doylei (strain ATCC BAA-1458 / RM4099 / 269.97).